The chain runs to 66 residues: Large ribosomal subunit protein uL29 (66 aa).

It belongs to the universal ribosomal protein uL29 family.

This Francisella philomiragia subsp. philomiragia (strain ATCC 25017 / CCUG 19701 / FSC 153 / O#319-036) protein is Large ribosomal subunit protein uL29.